A 381-amino-acid polypeptide reads, in one-letter code: E3 ubiquitin-protein ligase KCMF1 (381 aa).

S2 is subject to N-acetylserine. S2 is modified (phosphoserine). The segment at H4–D60 adopts a ZZ-type zinc-finger fold. Zn(2+) contacts are provided by C9, C12, C24, C27, C33, C36, H46, and H50. Residues F78–H101 form a C2H2-type zinc finger. A disordered region spans residues M154–E194. A phosphoserine mark is found at S169, S189, and S212. The segment covering S175–S192 has biased composition (low complexity). Residues A224–N259 adopt a coiled-coil conformation. Phosphoserine is present on residues S335 and S336.

Belongs to the KCMF1 family. In terms of assembly, component of the SIFI complex, composed of KCMF1, UBR4 and calmodulin (CALM1, CALM2 or CALM3). Testis, liver, kidney, heart and skeletal muscle.

Its subcellular location is the cytoplasm. The protein localises to the late endosome. It is found in the lysosome. The catalysed reaction is S-ubiquitinyl-[E2 ubiquitin-conjugating enzyme]-L-cysteine + [acceptor protein]-L-lysine = [E2 ubiquitin-conjugating enzyme]-L-cysteine + N(6)-ubiquitinyl-[acceptor protein]-L-lysine.. Its pathway is protein modification; protein ubiquitination. Its function is as follows. E3 ubiquitin-protein ligase which accepts ubiquitin from an E2 ubiquitin-conjugating enzyme and then transfers it to targeted substrates, promoting their degradation by the proteasome. Together with UBR4, component of the N-end rule pathway: ubiquitinates proteins bearing specific N-terminal residues that are destabilizing according to the N-end rule, leading to their degradation. Does not ubiquitinate proteins that are acetylated at the N-terminus. Together with UBR4, part of a protein quality control pathway that catalyzes ubiquitination and degradation of proteins that have been oxidized in response to reactive oxygen species (ROS): recognizes proteins with an Arg-CysO3(H) degron at the N-terminus, and mediates assembly of heterotypic 'Lys-63'-/'Lys-27'-linked branched ubiquitin chains on oxidized proteins, leading to their degradation by autophagy. Catalytic component of the SIFI complex, a multiprotein complex required to inhibit the mitochondrial stress response after a specific stress event has been resolved: ubiquitinates and degrades (1) components of the HRI-mediated signaling of the integrated stress response, such as DELE1 and EIF2AK1/HRI, as well as (2) unimported mitochondrial precursors. Within the SIFI complex, UBR4 initiates ubiquitin chain that are further elongated or branched by KCMF1. This Mus musculus (Mouse) protein is E3 ubiquitin-protein ligase KCMF1.